A 119-amino-acid chain; its full sequence is Ribonuclease P protein component (119 aa).

This sequence belongs to the RnpA family. In terms of assembly, consists of a catalytic RNA component (M1 or rnpB) and a protein subunit.

It carries out the reaction Endonucleolytic cleavage of RNA, removing 5'-extranucleotides from tRNA precursor.. In terms of biological role, RNaseP catalyzes the removal of the 5'-leader sequence from pre-tRNA to produce the mature 5'-terminus. It can also cleave other RNA substrates such as 4.5S RNA. The protein component plays an auxiliary but essential role in vivo by binding to the 5'-leader sequence and broadening the substrate specificity of the ribozyme. This Bacillus pumilus (strain SAFR-032) protein is Ribonuclease P protein component.